Reading from the N-terminus, the 426-residue chain is Histidine--tRNA ligase (426 aa).

The protein belongs to the class-II aminoacyl-tRNA synthetase family. In terms of assembly, homodimer.

Its subcellular location is the cytoplasm. The catalysed reaction is tRNA(His) + L-histidine + ATP = L-histidyl-tRNA(His) + AMP + diphosphate + H(+). The chain is Histidine--tRNA ligase (hisS) from Streptococcus dysgalactiae subsp. equisimilis (Streptococcus equisimilis).